The primary structure comprises 343 residues: Heat-inducible transcription repressor HrcA (343 aa).

This sequence belongs to the HrcA family.

Negative regulator of class I heat shock genes (grpE-dnaK-dnaJ and groELS operons). Prevents heat-shock induction of these operons. This is Heat-inducible transcription repressor HrcA from Mycoplasma genitalium (strain ATCC 33530 / DSM 19775 / NCTC 10195 / G37) (Mycoplasmoides genitalium).